Reading from the N-terminus, the 170-residue chain is Cyclic pyranopterin monophosphate synthase (170 aa).

Residues 75 to 77 (MCH) and 115 to 116 (ME) each bind substrate. Residue Asp130 is part of the active site.

This sequence belongs to the MoaC family. As to quaternary structure, homohexamer; trimer of dimers.

It carries out the reaction (8S)-3',8-cyclo-7,8-dihydroguanosine 5'-triphosphate = cyclic pyranopterin phosphate + diphosphate. It participates in cofactor biosynthesis; molybdopterin biosynthesis. Catalyzes the conversion of (8S)-3',8-cyclo-7,8-dihydroguanosine 5'-triphosphate to cyclic pyranopterin monophosphate (cPMP). This is Cyclic pyranopterin monophosphate synthase from Bacillus velezensis (strain DSM 23117 / BGSC 10A6 / LMG 26770 / FZB42) (Bacillus amyloliquefaciens subsp. plantarum).